Reading from the N-terminus, the 418-residue chain is PP2A regulatory subunit TAP46 (418 aa).

The tract at residues 367–418 is disordered; it reads KMIQESNSAWHKDGSRSAQEDEDAEEEKARAWDDWKDDNPRGAGNKKLTPCG. Composition is skewed to basic and acidic residues over residues 376-385 and 393-406; these read WHKDGSRSAQ and EKARAWDDWKDDNP.

This sequence belongs to the IGBP1/TAP42 family.

Involved in the regulation of the TOR signaling pathway. Seems to act as a regulator of PP2A catalytic activity. This is PP2A regulatory subunit TAP46 from Oryza sativa subsp. japonica (Rice).